Consider the following 261-residue polypeptide: Putative imidazole glycerol phosphate synthase subunit hisF2 (261 aa).

The active site involves Asp-138.

The protein belongs to the HisA/HisF family. In terms of assembly, heterodimer of HisH and HisF.

The protein localises to the cytoplasm. The catalysed reaction is 5-[(5-phospho-1-deoxy-D-ribulos-1-ylimino)methylamino]-1-(5-phospho-beta-D-ribosyl)imidazole-4-carboxamide + L-glutamine = D-erythro-1-(imidazol-4-yl)glycerol 3-phosphate + 5-amino-1-(5-phospho-beta-D-ribosyl)imidazole-4-carboxamide + L-glutamate + H(+). It functions in the pathway amino-acid biosynthesis; L-histidine biosynthesis; L-histidine from 5-phospho-alpha-D-ribose 1-diphosphate: step 5/9. IGPS catalyzes the conversion of PRFAR and glutamine to IGP, AICAR and glutamate. The HisF subunit catalyzes the cyclization activity that produces IGP and AICAR from PRFAR using the ammonia provided by the HisH subunit. This chain is Putative imidazole glycerol phosphate synthase subunit hisF2 (hisF2), found in Prochlorococcus marinus (strain MIT 9313).